Reading from the N-terminus, the 126-residue chain is Alpha-lactalbumin (126 aa).

Residues K1–C126 enclose the C-type lysozyme domain. 4 disulfide bridges follow: C6-C126, C30-C117, C63-C82, and C78-C96. N-linked (GlcNAc...) asparagine glycosylation occurs at N47. 5 residues coordinate Ca(2+): K84, D87, D89, D92, and D93.

Belongs to the glycosyl hydrolase 22 family. Lactose synthase (LS) is a heterodimer of a catalytic component, beta1,4-galactosyltransferase (beta4Gal-T1) and a regulatory component, alpha-lactalbumin (LA). As to expression, mammary gland specific. Secreted in milk.

It is found in the secreted. In terms of biological role, regulatory subunit of lactose synthase, changes the substrate specificity of galactosyltransferase in the mammary gland making glucose a good acceptor substrate for this enzyme. This enables LS to synthesize lactose, the major carbohydrate component of milk. In other tissues, galactosyltransferase transfers galactose onto the N-acetylglucosamine of the oligosaccharide chains in glycoproteins. The chain is Alpha-lactalbumin (LALBA) from Tachyglossus aculeatus aculeatus (Southeast Australian short-beaked echidna).